Reading from the N-terminus, the 193-residue chain is Ion-translocating oxidoreductase complex subunit A (193 aa).

A run of 6 helical transmembrane segments spans residues 5-25 (LLLL…FLGL), 39-59 (VGMG…SYLM), 63-83 (ILIP…VIAV), 102-122 (LLGI…VALL), 134-154 (IIYG…FAAM), and 171-191 (SIAM…TGLI).

It belongs to the NqrDE/RnfAE family. In terms of assembly, the complex is composed of six subunits: RnfA, RnfB, RnfC, RnfD, RnfE and RnfG.

The protein resides in the cell inner membrane. Part of a membrane-bound complex that couples electron transfer with translocation of ions across the membrane. This Aeromonas salmonicida (strain A449) protein is Ion-translocating oxidoreductase complex subunit A.